Reading from the N-terminus, the 346-residue chain is UDP-3-O-acylglucosamine N-acyltransferase (346 aa).

His253 functions as the Proton acceptor in the catalytic mechanism.

Belongs to the transferase hexapeptide repeat family. LpxD subfamily. Homotrimer.

The catalysed reaction is a UDP-3-O-[(3R)-3-hydroxyacyl]-alpha-D-glucosamine + a (3R)-hydroxyacyl-[ACP] = a UDP-2-N,3-O-bis[(3R)-3-hydroxyacyl]-alpha-D-glucosamine + holo-[ACP] + H(+). The protein operates within bacterial outer membrane biogenesis; LPS lipid A biosynthesis. Functionally, catalyzes the N-acylation of UDP-3-O-acylglucosamine using 3-hydroxyacyl-ACP as the acyl donor. Is involved in the biosynthesis of lipid A, a phosphorylated glycolipid that anchors the lipopolysaccharide to the outer membrane of the cell. This chain is UDP-3-O-acylglucosamine N-acyltransferase, found in Rickettsia conorii (strain ATCC VR-613 / Malish 7).